Reading from the N-terminus, the 397-residue chain is MAVQETDLDKQLLQLSIQVADLAARTDSRGSQKIQDFLIKTQQSLESPWETLMRYYDLDFQHVAIRIGCDMQVFTTLTTADKPMKLQDIANVNGASERLLGRVLRYLASINTIEEVGKDTFEANHITRTLSKPGIEGGIRLSSACQRPTNSALPDLLVERGFQDITSATETAFNKAWASREPFFTWVRSQPKIFEYLRLALDVQFREDWLNAFPLESHLGDFASRADPEKVLFVDVGGNLGIQCRGLKAKFPHLSGRIILEDLQETIDVALALEGVETLAQDYLTEQKVKGAKFYYYRNIFHDNPDDRCRLILDALKPAMEESSLLLIDDKVLLNQGSHRHVTMLDLAMMAQVASHERTRAQWQALLEGAGWKIEDIFQYSHEYDSIIVVKPAAQNA.

Asp-262 contacts S-adenosyl-L-methionine. The active-site Proton acceptor is His-302.

The protein belongs to the class I-like SAM-binding methyltransferase superfamily. Cation-independent O-methyltransferase family. S-adenosyl-L-methionine is required as a cofactor.

It functions in the pathway mycotoxin biosynthesis. 16-O-methyltransferase; part of the gene cluster that mediates the biosynthesis of the diterpene glucoside brassicicene C. In the first step of the brassicicene C biosynthesis, the bifunctional diterpene synthase bsc8 that possesses both prenyl transferase and terpene cyclase activity, converts isopentenyl diphosphate and dimethylallyl diphosphate into geranylgeranyl diphosphate (GGDP) that is further converted into fusicocca-2,10(14)-diene, the first precursor for brassicicene C. Fusicocca-2,10(14)-diene is then substrate of cytochrome P450 monooxygenase bsc1 for hydroxylation at the C-8 position. Oxidation at C-16 position to aldehyde is then catalyzed by the cytochrome P450 monooyxygenase bsc7, yielding fusicocca-2,10(14)-diene-8-beta,16-diol. Follows the isomerization of the double bond and reduction of aldehyde to alcohol catalyzed by the short-chain dehydrogenase/reductase bsc3 to yield the diol compound fusicocca-1,10(14)-diene-8 beta,16-diol. The next step is the oxidation at the C-3 position of fusicocca-2,10(14)-diene-8-beta,16-diol catalyzed by the alpha-ketoglutarate dependent dioxygenase bsc9, to produce a triol compound. Methylation of the hydroxy group at position 16 is performed by the methyltransferase bsc6. 16-O-methylation is followed by oxidation at the C-13 position to ketone and an alkyl shift of the methyl group leads to brassicicene C. Although the probable acetyltransferase bsc4 is included in the gene cluster, no acetylation reactions are necessary for brassicicene C biosynthesis. However, the fact that brassicicene E, which is a structurally related compound having an acetoxy group at position 12, was previously isolated from another strain of A.brassicicola suggests that the ATCC 96836 strain might also produce a small amount of brassicicene E. The protein is 16-O-methyltransferase bsc6 of Alternaria brassicicola (Dark leaf spot agent).